Here is a 137-residue protein sequence, read N- to C-terminus: Envelope glycoprotein L (137 aa).

The first 22 residues, 1–22 (MRAVGVFLAICLVTIFVLPTWG), serve as a signal peptide directing secretion. The segment at 23–128 (NWAYPCCHVT…SVEDLFGANL (106 aa)) is interaction with gH. 2 disulfide bridges follow: C28–C56 and C29–C79.

Belongs to the herpesviridae glycoprotein L family. Interacts with glycoprotein H (gH); this interaction is necessary for the correct processing and cell surface expression of gH. The heterodimer gH/gL seems to interact with gB trimers during fusion. The heterodimer gH/gL interacts with host EPHA2 to facilitate virus internalization and fusion.

It localises to the virion membrane. It is found in the host cell membrane. Its subcellular location is the host Golgi apparatus. The protein resides in the host trans-Golgi network. In terms of biological role, the heterodimer glycoprotein H-glycoprotein L is required for the fusion of viral and plasma membranes leading to virus entry into the host cell. Acts as a functional inhibitor of gH and maintains gH in an inhibited form. Upon binding to host integrins, gL dissociates from gH leading to activation of the viral fusion glycoproteins gB and gH. Fusion of EBV with B-lymphocytes requires the additional receptor-binding protein gp42, which forms a complex with gH/gL. The heterodimer gH/gL targets also host EPHA2 to promote viral entry. The chain is Envelope glycoprotein L from Homo sapiens (Human).